Reading from the N-terminus, the 521-residue chain is Jacalin-related lectin 38 (521 aa).

In terms of domain architecture, F-box spans 2-48 (MQPDHDLPYDLEGEILSHLPIQILARFRCVCKRWNTLFKERRFFNSD). 3 Kelch repeats span residues 145-190 (KHYK…PYSV), 326-373 (YIYI…ITQH), and 486-521 (MSFV…SPLP). Residues 377 to 519 (SRFAPLRGIQ…LTAFGVHFSP (143 aa)) enclose the Jacalin-type lectin domain.

This sequence belongs to the jacalin lectin family.

The protein is Jacalin-related lectin 38 (JAL38) of Arabidopsis thaliana (Mouse-ear cress).